A 257-amino-acid chain; its full sequence is UPF0246 protein Rpic_2164 (257 aa).

This sequence belongs to the UPF0246 family.

This is UPF0246 protein Rpic_2164 from Ralstonia pickettii (strain 12J).